The primary structure comprises 142 residues: Large ribosomal subunit protein uL11 (142 aa).

Belongs to the universal ribosomal protein uL11 family. In terms of assembly, part of the ribosomal stalk of the 50S ribosomal subunit. Interacts with L10 and the large rRNA to form the base of the stalk. L10 forms an elongated spine to which L12 dimers bind in a sequential fashion forming a multimeric L10(L12)X complex. One or more lysine residues are methylated.

In terms of biological role, forms part of the ribosomal stalk which helps the ribosome interact with GTP-bound translation factors. The sequence is that of Large ribosomal subunit protein uL11 from Lachnoclostridium phytofermentans (strain ATCC 700394 / DSM 18823 / ISDg) (Clostridium phytofermentans).